The chain runs to 363 residues: Protein U2 (363 aa).

The signal sequence occupies residues 1–18; it reads MFCRSPFLGISSWSLASA.

The protein is Protein U2 (U2) of Homo sapiens (Human).